We begin with the raw amino-acid sequence, 183 residues long: Peptidoglycan recognition protein 1 (183 aa).

An N-terminal signal peptide occupies residues 1-17; sequence MLFAWAPFPALLGLADS. 3 cysteine pairs are disulfide-bonded: C18/C142, C34/C79, and C55/C61. The region spanning 40 to 168 is the N-acetylmuramoyl-L-alanine amidase domain; it reads KPVRYVVISH…RDVQSTLSPG (129 aa).

The protein belongs to the N-acetylmuramoyl-L-alanine amidase 2 family. In terms of tissue distribution, expressed in all regions of the brain.

The protein localises to the secreted. It is found in the cytoplasmic granule. Functionally, innate immunity protein that plays several important functions in antimicrobial and antitumor defense systems. Acts as a pattern receptor that binds to murein peptidoglycans (PGN) of Gram-positive bacteria and thus provides bactericidal activity. Forms an equimolar complex with heat shock protein HSPA1A and induces programmed cell death through apoptosis and necroptosis in tumor cell lines by activating the TNFR1 receptor on the target cell membrane. In addition, acts in complex with the Ca(2+)-binding protein S100A4 as a chemoattractant able to induce lymphocyte movement. Mechanistically, this complex acts as a ligand of the chemotactic receptors CCR5 and CXCR3 which are present on the cells of the immune system. Promotes also the activation of lymphocytes that become able to kill virus-infected cells as well as tumor cells by modulating the spectrum of their target-cell specificity. Induction of cytotoxicity on monocyte surface requires interaction with TREM1 receptor. The sequence is that of Peptidoglycan recognition protein 1 (Pglyrp1) from Rattus norvegicus (Rat).